A 333-amino-acid polypeptide reads, in one-letter code: NADH-quinone oxidoreductase subunit H (333 aa).

8 consecutive transmembrane segments (helical) span residues 15–35 (FFIF…FVTY), 88–108 (FILA…VIPF), 117–137 (IGVG…GVVT), 159–179 (ISYE…AGSL), 191–211 (VWYI…AVAE), 239–259 (WAFF…LITV), 274–296 (IPGA…WFRV), and 313–333 (VLLP…ELFF).

Belongs to the complex I subunit 1 family. NDH-1 is composed of 14 different subunits. Subunits NuoA, H, J, K, L, M, N constitute the membrane sector of the complex.

It is found in the cell membrane. The catalysed reaction is a quinone + NADH + 5 H(+)(in) = a quinol + NAD(+) + 4 H(+)(out). Functionally, NDH-1 shuttles electrons from NADH, via FMN and iron-sulfur (Fe-S) centers, to quinones in the respiratory chain. The immediate electron acceptor for the enzyme in this species is believed to be ubiquinone. Couples the redox reaction to proton translocation (for every two electrons transferred, four hydrogen ions are translocated across the cytoplasmic membrane), and thus conserves the redox energy in a proton gradient. This subunit may bind ubiquinone. In Bacillus thuringiensis subsp. konkukian (strain 97-27), this protein is NADH-quinone oxidoreductase subunit H.